Consider the following 398-residue polypeptide: Autophagy protein 5 (398 aa).

Residues 99-147 (NSNNNNNNNNNNNNNNNNNNNNNNNNNNNNNNNNNNNNNNNNNNNNNNN) form a disordered region. A Glycyl lysine isopeptide (Lys-Gly) (interchain with G-Cter in ATG12) cross-link involves residue Lys-187. A disordered region spans residues 292–321 (NNNNINNNSPPLSPNSNNNNNNNNVDNSIE).

This sequence belongs to the ATG5 family. Conjugated to atg12; which is essential for autophagy.

It is found in the cytoplasm. The protein resides in the preautophagosomal structure membrane. Functionally, involved in autophagic vesicle formation. Conjugation with atg12, through a ubiquitin-like conjugating system involving atg7 as an E1-like activating enzyme and atg10 as an E2-like conjugating enzyme, is essential for its function. The atg12-atg5 conjugate acts as an E3-like enzyme which is required for lipidation of atg8 and its association to the vesicle membranes. This is Autophagy protein 5 (atg5) from Dictyostelium discoideum (Social amoeba).